The sequence spans 450 residues: Tol-Pal system protein TolB (450 aa).

The signal sequence occupies residues 1–37 (MIERNGLQRMPFRLNRRHMISGMASAAVLLGSRQALG).

This sequence belongs to the TolB family. In terms of assembly, the Tol-Pal system is composed of five core proteins: the inner membrane proteins TolA, TolQ and TolR, the periplasmic protein TolB and the outer membrane protein Pal. They form a network linking the inner and outer membranes and the peptidoglycan layer.

It localises to the periplasm. In terms of biological role, part of the Tol-Pal system, which plays a role in outer membrane invagination during cell division and is important for maintaining outer membrane integrity. In Nitrobacter winogradskyi (strain ATCC 25391 / DSM 10237 / CIP 104748 / NCIMB 11846 / Nb-255), this protein is Tol-Pal system protein TolB.